The primary structure comprises 236 residues: Sugar fermentation stimulation protein homolog (236 aa).

It belongs to the SfsA family.

This Paramagnetospirillum magneticum (strain ATCC 700264 / AMB-1) (Magnetospirillum magneticum) protein is Sugar fermentation stimulation protein homolog.